We begin with the raw amino-acid sequence, 310 residues long: GTP-binding protein GTR1 (310 aa).

GTP contacts are provided by Ser15, Gly18, Lys19, Ser20, Ser21, Thr35, Thr41, Gly64, His126, Asp129, and Ile166.

It belongs to the GTR/RAG GTP-binding protein family. Heterodimer; with GTR2. Component of the GSE complex composed of GTR1, GTR2, SLM4, MEH1 and LTV1. Interacts with GTR2; the interaction is direct. Interacts with TOR1.

Its subcellular location is the vacuole membrane. The enzyme catalyses GTP + H2O = GDP + phosphate + H(+). Functionally, GTPase involved in activation of the TORC1 signaling pathway, which promotes growth and represses autophagy in nutrient-rich conditions. Also required for TORC1 inactivation during nitrogen starvation. Required for intracellular sorting of GAP1 out of the endosome. Functionally associated with the inorganic phosphate transporter PHO84, and may be involved in regulating its function or localization. The polypeptide is GTP-binding protein GTR1 (GTR1) (Saccharomyces cerevisiae (strain ATCC 204508 / S288c) (Baker's yeast)).